Consider the following 317-residue polypeptide: Transaldolase (317 aa).

Lys132 acts as the Schiff-base intermediate with substrate in catalysis.

The protein belongs to the transaldolase family. Type 1 subfamily. Homodimer.

It is found in the cytoplasm. The catalysed reaction is D-sedoheptulose 7-phosphate + D-glyceraldehyde 3-phosphate = D-erythrose 4-phosphate + beta-D-fructose 6-phosphate. It functions in the pathway carbohydrate degradation; pentose phosphate pathway; D-glyceraldehyde 3-phosphate and beta-D-fructose 6-phosphate from D-ribose 5-phosphate and D-xylulose 5-phosphate (non-oxidative stage): step 2/3. Transaldolase is important for the balance of metabolites in the pentose-phosphate pathway. This Yersinia pseudotuberculosis serotype IB (strain PB1/+) protein is Transaldolase.